We begin with the raw amino-acid sequence, 65 residues long: Large ribosomal subunit protein bL35 (65 aa).

Residues 28-53 (NGSHNLEKKNRKRTRRLHQSTMLDNA) are disordered. The segment covering 36-45 (KNRKRTRRLH) has biased composition (basic residues).

The protein belongs to the bacterial ribosomal protein bL35 family.

The sequence is that of Large ribosomal subunit protein bL35 from Chlorobium luteolum (strain DSM 273 / BCRC 81028 / 2530) (Pelodictyon luteolum).